A 220-amino-acid chain; its full sequence is Peptidyl-tRNA hydrolase (220 aa).

A tRNA-binding site is contributed by Y14. The Proton acceptor role is filled by H19. TRNA contacts are provided by F60, N62, and N106.

This sequence belongs to the PTH family. In terms of assembly, monomer.

It localises to the cytoplasm. It carries out the reaction an N-acyl-L-alpha-aminoacyl-tRNA + H2O = an N-acyl-L-amino acid + a tRNA + H(+). Hydrolyzes ribosome-free peptidyl-tRNAs (with 1 or more amino acids incorporated), which drop off the ribosome during protein synthesis, or as a result of ribosome stalling. Its function is as follows. Catalyzes the release of premature peptidyl moieties from peptidyl-tRNA molecules trapped in stalled 50S ribosomal subunits, and thus maintains levels of free tRNAs and 50S ribosomes. This is Peptidyl-tRNA hydrolase from Campylobacter hominis (strain ATCC BAA-381 / DSM 21671 / CCUG 45161 / LMG 19568 / NCTC 13146 / CH001A).